A 362-amino-acid polypeptide reads, in one-letter code: Putative RING-H2 finger protein ATL21B (362 aa).

A signal peptide spans 1–23 (MIISKQLFLLFFLLFFIFPLRHA). Residues 234-254 (VVAVLICLSIIGAVILFVTCI) traverse the membrane as a helical segment. An RING-type; atypical zinc finger spans residues 316-358 (CPICLSEYVSKETVRFIPECDHCFHAKCIDVWLKIHGSCPLCR).

Belongs to the RING-type zinc finger family. ATL subfamily.

The protein resides in the membrane. It carries out the reaction S-ubiquitinyl-[E2 ubiquitin-conjugating enzyme]-L-cysteine + [acceptor protein]-L-lysine = [E2 ubiquitin-conjugating enzyme]-L-cysteine + N(6)-ubiquitinyl-[acceptor protein]-L-lysine.. Its pathway is protein modification; protein ubiquitination. The polypeptide is Putative RING-H2 finger protein ATL21B (ATL21B) (Arabidopsis thaliana (Mouse-ear cress)).